The sequence spans 80 residues: Defensin-like protein 276 (80 aa).

The N-terminal stretch at 1-24 is a signal peptide; sequence MSGQKYQLVSLLLIICLLFSQSTA. Cystine bridges form between Cys27–Cys67, Cys33–Cys55, Cys39–Cys65, and Cys43–Cys66.

This sequence belongs to the DEFL family.

It is found in the secreted. The sequence is that of Defensin-like protein 276 from Arabidopsis thaliana (Mouse-ear cress).